A 438-amino-acid chain; its full sequence is sn-glycerol-3-phosphate-binding periplasmic protein UgpB (438 aa).

The N-terminal stretch at methionine 1–alanine 23 is a signal peptide. Sn-glycerol 3-phosphate is bound by residues tyrosine 65, glutamate 89, serine 144, serine 270, glycine 307, tyrosine 346, and arginine 397.

Belongs to the bacterial solute-binding protein 1 family. In terms of assembly, the complex is composed of two ATP-binding proteins (UgpC), two transmembrane proteins (UgpA and UgpE) and a solute-binding protein (UgpB).

The protein localises to the periplasm. Part of the ABC transporter complex UgpBAEC involved in sn-glycerol-3-phosphate (G3P) import. Binds G3P. The chain is sn-glycerol-3-phosphate-binding periplasmic protein UgpB (ugpB) from Shigella flexneri serotype 5b (strain 8401).